The chain runs to 259 residues: HTH-type quorum sensing-dependent transcriptional regulator VjbR (259 aa).

The interval 76–179 (KNYFAIDPVF…AGIIHGTVCG (104 aa)) is C12-HSL binding. Residues 183–248 (ANSVASLLTP…SAVATALSLG (66 aa)) form the HTH luxR-type domain. Residues 207–226 (DGEIAEILSIARWTVVTYLQ) constitute a DNA-binding region (H-T-H motif).

Transcriptional regulator involved in the global control of Brucella gene expression. Mediates the effects of the quorum sensing autoinducer C12-HSL (N-dodecanoyl-homoserine lactone) on a large and diverse number of genes. This is HTH-type quorum sensing-dependent transcriptional regulator VjbR (vjbR) from Brucella ovis (strain ATCC 25840 / 63/290 / NCTC 10512).